The following is an 839-amino-acid chain: MANILRKVIENDKGELRKLEKIAKKVESYADQMASLSDRDLQGKTLEFKERYQKGETLEQLLPEAFAVVREAAKRVLGLFPYRVQIMGGIVLHNGDVPEMRTGEGKTLTATMPVYLNAIAGEGVHVITVNEYLSTRDATEMGEVYSWLGLSVGINLAAKSPAEKREAYNCDITYSTNSEVGFDYLRDNMVVRQEDMVQRPLNFALVDEVDSVLIDEARTPLIVSGAVSSETNQLYIRADMFVKTLTSVDYVIDVPTKTIGLSDSGIDKAESYFNLSNLYDIENVALTHFIDNALRANYIMLLDIDYVVSEDGEILIVDQFTGRTMEGRRFSDGLHQAIEAKEGVRIQEESKTSASITYQNMFRMYKKLAGMTGTAKTEEEEFREVYNMRIIPIPTNRPIARIDHTDLLYPTLESKFRAVVEDVKTRHAKGQPILVGTVAVETSDLISRKLVEAGIPHEVLNAKNHFKEAQIIMNAGQRGAVTIATNMAGRGTDIKLGEGVRELGGLCVIGTERHESRRIDNQLRGRSGRQGDPGESQFYLSLEDDLMRRFGSDRIKAFLDRMKLDEEDTVIKSGMLGRQVESAQKRVEGNNYDTRKQVLQYDDVMREQREIIYANRRDVITANRDLGPEIKAMIKRTIDRAVDAHARSNRKDAIDAIVTFARTSLVPEEFISAKELRGLKDDQIKEKLYQRALAIYDQQLSKLRDQEAIIEFQKVLILMIVDNKWTEHIDALDQLRNAVGLRGYAQNNPVVEYQAEGFKMFQDMIGAIEFDVTRTMMKAQIHEQERERASQRATTAAPQNIQSQQSANTDDLPKVERNEACPCGSGKKFKNCHGRKSFS.

ATP contacts are provided by residues Q85, 103–107, and D493; that span reads GEGKT. Over residues 780–790 the composition is skewed to basic and acidic residues; sequence QIHEQERERAS. The disordered stretch occupies residues 780–839; sequence QIHEQERERASQRATTAAPQNIQSQQSANTDDLPKVERNEACPCGSGKKFKNCHGRKSFS. Residues 791–809 show a composition bias toward polar residues; the sequence is QRATTAAPQNIQSQQSANT. C821, C823, C832, and H833 together coordinate Zn(2+). The span at 827–839 shows a compositional bias: basic residues; sequence KKFKNCHGRKSFS.

The protein belongs to the SecA family. Monomer and homodimer. Part of the essential Sec protein translocation apparatus which comprises SecA, SecYEG and auxiliary proteins SecDF. Other proteins may also be involved. It depends on Zn(2+) as a cofactor.

It localises to the cell membrane. The protein resides in the cytoplasm. The catalysed reaction is ATP + H2O + cellular proteinSide 1 = ADP + phosphate + cellular proteinSide 2.. Part of the Sec protein translocase complex. Interacts with the SecYEG preprotein conducting channel. Has a central role in coupling the hydrolysis of ATP to the transfer of proteins into and across the cell membrane, serving as an ATP-driven molecular motor driving the stepwise translocation of polypeptide chains across the membrane. The chain is Protein translocase subunit SecA from Streptococcus pyogenes serotype M1.